The primary structure comprises 353 residues: Small ribosomal subunit protein uS2 (353 aa).

The interval 256–353 is disordered; that stretch reads DTDEQSSAAN…TPAESTDEQA (98 aa). Composition is skewed to low complexity over residues 263-311 and 321-339; these read AANT…AEAP and ESATPAEAEVEAESATPAE. Acidic residues predominate over residues 340–353; that stretch reads AEAETPAESTDEQA.

It belongs to the universal ribosomal protein uS2 family.

This Beutenbergia cavernae (strain ATCC BAA-8 / DSM 12333 / CCUG 43141 / JCM 11478 / NBRC 16432 / NCIMB 13614 / HKI 0122) protein is Small ribosomal subunit protein uS2.